The chain runs to 270 residues: A-type potassium channel modulatory protein KCNIP2 (270 aa).

Basic and acidic residues predominate over residues Met-1 to Asp-17. Residues Met-1–Ala-34 form a disordered region. At Ser-9 the chain carries Phosphoserine. 2 S-palmitoyl cysteine lipidation sites follow: Cys-45 and Cys-46. An EF-hand 1; degenerate domain is found at Phe-81–Pro-137. EF-hand domains are found at residues Asp-140–Gly-175, Thr-176–Met-211, and Ala-224–Ile-259. 14 residues coordinate Ca(2+): Asp-153, Asn-155, Asp-157, Ser-159, Asp-164, Asp-189, Asn-191, Asp-193, Cys-195, Glu-200, Asp-237, Asn-239, Asp-241, and Glu-248. Residues Glu-257–Ile-270 are interaction with KCND2.

Belongs to the recoverin family. As to quaternary structure, component of heteromultimeric potassium channels. Identified in potassium channel complexes containing KCND1, KCND2, KCND3, KCNIP1, KCNIP2, KCNIP3, KCNIP4, DPP6 and DPP10. The KCND2-KCNIP2 channel complex contains four KCND2 and four KCNIP2 subunits. Interacts with KCND2. Probably part of a complex consisting of KCNIP1, KCNIP2 isoform 3 and KCND2. At least isoform 2 and isoform 3 can self-associate to form homodimers and homotetramers. Isoform 3 interacts with KCNIP1 in a calcium-dependent manner. Interacts with KCND3; each KCNIP2 monomer interacts with two adjacent KCND3 subunits, through both the N-terminal inactivation ball of a KCND3 subunit and a C-terminal helix from the adjacent KCND3 subunit, clamping them together; this interaction modulates the channel gating kinetics. Post-translationally, palmitoylated. Palmitoylation enhances association with the plasma membrane. As to expression, expressed in heart, brain and lung. In brain, abundantly expressed in striatum, hippocampus and olfactory bulb, moderately expressed in cerebral cortex and lowly expressed in thalamus and hypothalamus. Isoform 1 is predominant in cerebral cortex, striatum and hippocampus. Isoform 1, isoform 2 and isoform 3 are equally expressed in olfactory bulb. Iisoform 3 is expressed at high levels and isoform 1 at low levels in heart (in PubMed:11263977).

It is found in the cell membrane. Its function is as follows. Regulatory subunit of Kv4/D (Shal)-type voltage-gated rapidly inactivating A-type potassium channels. Modulates channel density, inactivation kinetics and rate of recovery from inactivation in a calcium-dependent and isoform-specific manner. Involved in KCND2 and KCND3 trafficking to the cell surface. Essential for the expression of I(To) currents in the heart. Required for normal protein levels of KCND2 in the heart ventricle. In Rattus norvegicus (Rat), this protein is A-type potassium channel modulatory protein KCNIP2.